A 226-amino-acid polypeptide reads, in one-letter code: Probable chemoreceptor glutamine deamidase CheD (226 aa).

This sequence belongs to the CheD family.

It carries out the reaction L-glutaminyl-[protein] + H2O = L-glutamyl-[protein] + NH4(+). Probably deamidates glutamine residues to glutamate on methyl-accepting chemotaxis receptors (MCPs), playing an important role in chemotaxis. The chain is Probable chemoreceptor glutamine deamidase CheD from Bordetella avium (strain 197N).